Reading from the N-terminus, the 231-residue chain is NADH-ubiquinone oxidoreductase chain 4 (231 aa).

Helical transmembrane passes span 1-21 (PIAG…YGII), 34-54 (LFLP…LTCL), 63-85 (IAYS…TPWG), 89-111 (AMAL…NTTY), 118-138 (ILIL…WWLL), and 156-176 (LLIM…LGLS).

It belongs to the complex I subunit 4 family.

It is found in the mitochondrion membrane. It carries out the reaction a ubiquinone + NADH + 5 H(+)(in) = a ubiquinol + NAD(+) + 4 H(+)(out). In terms of biological role, core subunit of the mitochondrial membrane respiratory chain NADH dehydrogenase (Complex I) that is believed to belong to the minimal assembly required for catalysis. Complex I functions in the transfer of electrons from NADH to the respiratory chain. The immediate electron acceptor for the enzyme is believed to be ubiquinone. The protein is NADH-ubiquinone oxidoreductase chain 4 (MT-ND4) of Ovophis okinavensis (Ryukyu Island pit viper).